Here is a 480-residue protein sequence, read N- to C-terminus: Lysosomal protective protein (480 aa).

An N-terminal signal peptide occupies residues 1 to 28; it reads MIRAAPPPLFLLLLLLLLLVSWASRGEA. 4 disulfides stabilise this stretch: cysteine 88–cysteine 362, cysteine 240–cysteine 256, cysteine 241–cysteine 246, and cysteine 281–cysteine 331. An N-linked (GlcNAc...) asparagine glycan is attached at asparagine 145. Serine 178 is an active-site residue. An N-linked (GlcNAc...) asparagine glycan is attached at asparagine 333. Catalysis depends on residues aspartate 400 and histidine 457.

It belongs to the peptidase S10 family. In terms of assembly, heterodimer of a 32 kDa chain and a 20 kDa chain; disulfide-linked.

Its subcellular location is the lysosome. The catalysed reaction is Release of a C-terminal amino acid with broad specificity.. Functionally, protective protein appears to be essential for both the activity of beta-galactosidase and neuraminidase, it associates with these enzymes and exerts a protective function necessary for their stability and activity. This protein is also a carboxypeptidase and can deamidate tachykinins. The chain is Lysosomal protective protein (CTSA) from Homo sapiens (Human).